A 335-amino-acid chain; its full sequence is Probable phosphoglycerate mutase ARB_03491 (335 aa).

Positions 1 to 24 (MAGRILLGLTLLATSLPLLAMGDA) are cleaved as a signal peptide. Histidine 108 functions as the Tele-phosphohistidine intermediate in the catalytic mechanism. Glutamate 211 acts as the Proton donor/acceptor in catalysis.

It belongs to the phosphoglycerate mutase family.

The protein resides in the secreted. Probable phosphomutase that may have a function related to the manipulation of phosphate groups on carbohydrates. This Arthroderma benhamiae (strain ATCC MYA-4681 / CBS 112371) (Trichophyton mentagrophytes) protein is Probable phosphoglycerate mutase ARB_03491.